The sequence spans 305 residues: Dihydroorotate dehydrogenase B (NAD(+)), catalytic subunit (305 aa).

FMN-binding positions include Ser21 and Lys45–Ala46. Residues Lys45 and Asn69–Leu73 each bind substrate. FMN-binding residues include Asn99 and Asn127. Asn127 is a substrate binding site. Cys130 (nucleophile) is an active-site residue. Residues Lys165 and Ile190 each contribute to the FMN site. Asn191–Thr192 contacts substrate. Residues Gly216, Gly242–Gly243, and Gly264–Thr265 contribute to the FMN site.

It belongs to the dihydroorotate dehydrogenase family. Type 1 subfamily. Heterotetramer of 2 PyrK and 2 PyrD type B subunits. FMN is required as a cofactor.

The protein localises to the cytoplasm. It carries out the reaction (S)-dihydroorotate + NAD(+) = orotate + NADH + H(+). It participates in pyrimidine metabolism; UMP biosynthesis via de novo pathway; orotate from (S)-dihydroorotate (NAD(+) route): step 1/1. In terms of biological role, catalyzes the conversion of dihydroorotate to orotate with NAD(+) as electron acceptor. In Staphylococcus carnosus (strain TM300), this protein is Dihydroorotate dehydrogenase B (NAD(+)), catalytic subunit (pyrD).